A 766-amino-acid polypeptide reads, in one-letter code: MNNSLQSSKLVLLLAIALVLFLNTELDFLTAAGALDSDSKVYIVYLGEREHDDPELVTASHHQMLESLLQSKEDAQNSLIYSYQHGFSGFAALLTSSQAKKISEHPEVIHVIPNRIRKLKTTRAWDHLGLSPIPTSFSSLSSVKGLLHDTNLGSEAIIGVIDSGIWPESKAVNDQGLGPIPKRWRGKCEPGEQFNATIHCNNKLIGARYYLNGVVAAIGGKFNRTIIQDFQSTRDANGHGTHTATIAGGSFVPNVSYFGLAQGLVRGGAPRARIASYKACWNVMRDEGGGTDGRCTSADMWKAFDDAIHDGVDVLSVSIGGGIPEDSEVDKLDYIAAFHAVAKGITVVAAAGNEGPGAHTVDNVAPWLLTVAATTLDRSFPTKITLGNNQTLFAESLFTGPEISTGLAFLDSDSDDTVDVKGKTVLVFDSATPIAGKGVAAVILAQKPDDLLSRCNGVPCIFPDYEFGTEILKYIRTTRSPTVRITAATTLTGQPATTKVAAFSCRGPNSVSPAILKPDIAAPGVSILAAISPLNPEEQNGFGLLSGTSMSTPVVSGIIALLKSLHPKWSPAAVRSALVTTAWRTSPSGEPIFAEGSNKKLADPFDYGGGLVNPEKAAKPGLVYDMGIVDYIKYMCSAGYNDSSISRVLGKKTNCPIPKPSMLDINLPSITIPNLEKEVTLTRTVTNVGPIKSVYRAVIESPLGITLTVNPTTLVFKSAAKRVLTFSVKAKTSHKVNTGYFFGSLTWSDGVHDVIIPVSVKTTISM.

Positions 1-21 (MNNSLQSSKLVLLLAIALVLF) are cleaved as a signal peptide. A propeptide spans 22–120 (LNTELDFLTA…VIPNRIRKLK (99 aa)) (activation peptide). Residues 41-119 (VYIVYLGERE…HVIPNRIRKL (79 aa)) enclose the Inhibitor I9 domain. A Peptidase S8 domain is found at 134–618 (PTSFSSLSSV…GGLVNPEKAA (485 aa)). Asp162 acts as the Charge relay system in catalysis. N-linked (GlcNAc...) asparagine glycosylation is found at Asn195 and Asn223. His239 acts as the Charge relay system in catalysis. Residues Asn254 and Asn389 are each glycosylated (N-linked (GlcNAc...) asparagine). The active-site Charge relay system is the Ser549. An N-linked (GlcNAc...) asparagine glycan is attached at Asn641.

Belongs to the peptidase S8 family.

The protein localises to the secreted. This Arabidopsis thaliana (Mouse-ear cress) protein is Subtilisin-like protease SBT3.13.